The primary structure comprises 213 residues: Sclerostin (213 aa).

The first 23 residues, 1–23, serve as a signal peptide directing secretion; that stretch reads MQLPLALCLVCLLVHAAFRVVEG. A disordered region spans residues 41 to 71; the sequence is GEYPEPPPELENNKTMNRAENGGRPPHHPFE. The N-linked (GlcNAc...) asparagine glycan is linked to Asn-53. Intrachain disulfides connect Cys-80–Cys-134, Cys-94–Cys-148, Cys-105–Cys-165, and Cys-109–Cys-167. One can recognise a CTCK domain in the interval 82-172; sequence ELHFTRYVTD…ASCKCKRLTR (91 aa). An N-linked (GlcNAc...) asparagine glycan is attached at Asn-175. The segment at 178 to 213 is disordered; that stretch reads ELKDFGPEAARPQKGRKPRPRARGAKANQAELENAY. Basic residues predominate over residues 190–201; sequence QKGRKPRPRARG.

It belongs to the sclerostin family. As to quaternary structure, interacts with LRP4 (via the extracellular domain); the interaction facilitates the inhibition of Wnt signaling. Interacts with LRP5 (via the first two YWTD-EGF repeat domains); the interaction inhibits Wnt-mediated signaling. Interacts with LRP6.

Its subcellular location is the secreted. It localises to the extracellular space. The protein resides in the extracellular matrix. In terms of biological role, negative regulator of bone growth that acts through inhibition of Wnt signaling and bone formation. The protein is Sclerostin of Chlorocebus aethiops (Green monkey).